The chain runs to 599 residues: Elongation factor 4 (599 aa).

The 183-residue stretch at 5–187 folds into the tr-type G domain; it reads SHIRNFSIIA…RLVTVIPAPE (183 aa). GTP contacts are provided by residues 17–22 and 134–137; these read DHGKST and NKMD.

Belongs to the TRAFAC class translation factor GTPase superfamily. Classic translation factor GTPase family. LepA subfamily.

Its subcellular location is the cell inner membrane. The catalysed reaction is GTP + H2O = GDP + phosphate + H(+). Functionally, required for accurate and efficient protein synthesis under certain stress conditions. May act as a fidelity factor of the translation reaction, by catalyzing a one-codon backward translocation of tRNAs on improperly translocated ribosomes. Back-translocation proceeds from a post-translocation (POST) complex to a pre-translocation (PRE) complex, thus giving elongation factor G a second chance to translocate the tRNAs correctly. Binds to ribosomes in a GTP-dependent manner. The protein is Elongation factor 4 of Pseudomonas paraeruginosa (strain DSM 24068 / PA7) (Pseudomonas aeruginosa (strain PA7)).